Reading from the N-terminus, the 101-residue chain is Large ribosomal subunit protein uL24 (101 aa).

It belongs to the universal ribosomal protein uL24 family. As to quaternary structure, part of the 50S ribosomal subunit.

Its function is as follows. One of two assembly initiator proteins, it binds directly to the 5'-end of the 23S rRNA, where it nucleates assembly of the 50S subunit. One of the proteins that surrounds the polypeptide exit tunnel on the outside of the subunit. This is Large ribosomal subunit protein uL24 from Streptococcus pyogenes serotype M1.